Here is a 314-residue protein sequence, read N- to C-terminus: Glucocorticoid receptor (314 aa).

A disordered region spans residues 1–44; it reads ASAAVSAAPTEKEFPKTHSDVSSEQQNLKGQKGSNGGSMKLHTT. Residues 1-281 are modulating; the sequence is ASAAVSAAPT…SAATGPPPKL (281 aa). Over residues 10-21 the composition is skewed to basic and acidic residues; the sequence is TEKEFPKTHSDV. Phosphoserine occurs at positions 65, 73, and 88. A Glycyl lysine isopeptide (Lys-Gly) (interchain with G-Cter in SUMO2) cross-link involves residue Lys-120. At Ser-129 the chain carries Phosphoserine. Glycyl lysine isopeptide (Lys-Gly) (interchain with G-Cter in SUMO); alternate cross-links involve residues Lys-139 and Lys-155. Residues Lys-139 and Lys-155 each participate in a glycyl lysine isopeptide (Lys-Gly) (interchain with G-Cter in SUMO2); alternate cross-link. Ser-266 is subject to Phosphoserine. Lys-280 is covalently cross-linked (Glycyl lysine isopeptide (Lys-Gly) (interchain with G-Cter in ubiquitin)). The NR C4-type zinc finger occupies 282-314; sequence CLVCSDEASGCHYGVLTCGSCKVFFKRAVEGQH. A DNA-binding region (nuclear receptor) is located at residues 282-314; the sequence is CLVCSDEASGCHYGVLTCGSCKVFFKRAVEGQH.

It belongs to the nuclear hormone receptor family. NR3 subfamily. Heteromultimeric cytoplasmic complex with HSP90AA1, HSPA1A/HSPA1B, and FKBP5 or another immunophilin such as PPID, STIP1, or the immunophilin homolog PPP5C. Upon ligand binding FKBP5 dissociates from the complex and FKBP4 takes its place, thereby linking the complex to dynein and mediating transport to the nucleus, where the complex dissociates. Probably forms a complex composed of chaperones HSP90 and HSP70, co-chaperones CDC37, PPP5C, TSC1 and client protein TSC2, CDK4, AKT, RAF1 and NR3C1; this complex does not contain co-chaperones STIP1/HOP and PTGES3/p23. Directly interacts with UNC45A. Binds to DNA as a homodimer, and as heterodimer with NR3C2 or the retinoid X receptor. Binds STAT5A and STAT5B homodimers and heterodimers. Interacts with NRIP1, POU2F1, POU2F2 and TRIM28. Interacts with several coactivator complexes, including the SMARCA4 complex, CREBBP/EP300, TADA2L (Ada complex) and p160 coactivators such as NCOA2 and NCOA6. Interaction with BAG1 inhibits transactivation. Interacts with HEXIM1 and TGFB1I1. Interacts with NCOA1. Interacts with NCOA3, SMARCA4, SMARCC1, SMARCD1, and SMARCE1. Interacts with CLOCK, CRY1 and CRY2 in a ligand-dependent fashion. Interacts with CIART. Interacts with RWDD3. Interacts with UBE2I/UBC9 and this interaction is enhanced in the presence of RWDD3. Interacts with GRIP1. Interacts with NR4A3 (via nuclear receptor DNA-binding domain), represses transcription activity of NR4A3 on the POMC promoter Nur response element (NurRE). Directly interacts with PNRC2 to attract and form a complex with UPF1 and DCP1A; the interaction leads to rapid mRNA degradation. Interacts with GSK3B. Interacts with FNIP1 and FNIP2. Interacts (via C-terminus) with HNRNPU (via C-terminus). Interacts with MCM3AP. Interacts (via domain NR LBD) with HSP90AA1 and HSP90AB1. In the absence of hormonal ligand, interacts with TACC1. Interacts (via NR LBD domain) with ZNF764 (via KRAB domain); the interaction regulates transcription factor activity of NR3C1 by directing its actions toward certain biologic pathways. Acetylation by CLOCK reduces its binding to glucocorticoid response elements and its transcriptional activity. In terms of processing, increased proteasome-mediated degradation in response to glucocorticoids. Post-translationally, phosphorylated in the absence of hormone; becomes hyperphosphorylated in the presence of glucocorticoid. The Ser-65, Ser-88 and Ser-266-phosphorylated forms are mainly cytoplasmic, and the Ser-73-phosphorylated form is nuclear. Phosphorylation at Ser-73 increases transcriptional activity. Phosphorylation at Ser-65, Ser-88 and Ser-266 decreases signaling capacity. Phosphorylation at Ser-266 may protect from glucocorticoid-induced apoptosis. Phosphorylation at Ser-65 and Ser-73 is not required in regulation of chromosome segregation. May be dephosphorylated by PPP5C, attenuates NR3C1 action. Ubiquitinated by UBR5, leading to its degradation: UBR5 specifically recognizes and binds ligand-bound NR3C1 when it is not associated with coactivators (NCOAs). In presence of NCOAs, the UBR5-degron is not accessible, preventing its ubiquitination and degradation. In terms of processing, sumoylation at Lys-139 and Lys-155 negatively regulates its transcriptional activity. Heat shock increases sumoylation in a RWDD3-dependent manner.

It localises to the cytoplasm. The protein resides in the nucleus. It is found in the mitochondrion. Its subcellular location is the cytoskeleton. The protein localises to the spindle. It localises to the microtubule organizing center. The protein resides in the centrosome. It is found in the chromosome. Its subcellular location is the nucleoplasm. Its function is as follows. Receptor for glucocorticoids (GC). Has a dual mode of action: as a transcription factor that binds to glucocorticoid response elements (GRE), both for nuclear and mitochondrial DNA, and as a modulator of other transcription factors. Affects inflammatory responses, cellular proliferation and differentiation in target tissues. Involved in chromatin remodeling. Plays a role in rapid mRNA degradation by binding to the 5' UTR of target mRNAs and interacting with PNRC2 in a ligand-dependent manner which recruits the RNA helicase UPF1 and the mRNA-decapping enzyme DCP1A, leading to RNA decay. Could act as a coactivator for STAT5-dependent transcription upon growth hormone (GH) stimulation and could reveal an essential role of hepatic GR in the control of body growth. Mediates glucocorticoid-induced apoptosis. Promotes accurate chromosome segregation during mitosis. May act as a tumor suppressor. May play a negative role in adipogenesis through the regulation of lipolytic and antilipogenic gene expression. The polypeptide is Glucocorticoid receptor (NR3C1) (Ovis aries (Sheep)).